Here is a 904-residue protein sequence, read N- to C-terminus: Auxilin-related protein 1 (904 aa).

Disordered stretches follow at residues 46–99 (AAGK…FDYD), 150–731 (SSIS…NLRK), and 749–776 (SASQSGGFQDVDGETEERRRARLERHQR). Residues 59-69 (DPGRDGDDLLF) are compositionally biased toward basic and acidic residues. The segment covering 81–95 (YGSSSGDSRSPSAPA) has biased composition (low complexity). Residues 178–188 (KGADSDREEKG) show a composition bias toward basic and acidic residues. Residues 201-215 (RTSSPPSKRTTSETT) are compositionally biased toward low complexity. The segment covering 232 to 244 (VEEDPFVVLEESE) has biased composition (acidic residues). Basic and acidic residues predominate over residues 245-271 (STPREPSRTDPLDDIGKFNSRKTDHSS). The segment covering 370-383 (SAPPPTRPPPPRPT) has biased composition (pro residues). The segment covering 394–419 (SIPTSAYHSHVPSSGRASVNSPTASQ) has biased composition (polar residues). Residues 456–663 (SAAAMKDAMD…AAAEARGRAA (208 aa)) are a coiled coil. 2 stretches are compositionally biased toward basic and acidic residues: residues 462 to 570 (DAMD…EAHA) and 581 to 660 (TDAR…EARG). One can recognise a R domain in the interval 619–640 (REKAEKAAAEAKERANAEAREK). Over residues 661–673 (RAAAQAKAKQQQE) the composition is skewed to low complexity. Positions 674-697 (NTNDLDSFFSSISRPNSAPRQRTN) are enriched in polar residues. The stretch at 762–804 (ETEERRRARLERHQRTQERAAKALAEKNERDLQVQREQVEKDR) forms a coiled coil. Over residues 764 to 776 (EERRRARLERHQR) the composition is skewed to basic and acidic residues. The region spanning 839–904 (CGWQPVSLTD…WNKFNSEELF (66 aa)) is the J domain.

In terms of assembly, interacts with SH3P1.

It localises to the cell membrane. It is found in the golgi apparatus. The protein localises to the trans-Golgi network. Its subcellular location is the endoplasmic reticulum. The protein resides in the cytoplasmic vesicle. Its function is as follows. Promotes uncoating of clathrin-coated vesicles. May interact directly with clathrin. This is Auxilin-related protein 1 from Arabidopsis thaliana (Mouse-ear cress).